The sequence spans 346 residues: Phosphate acyltransferase (346 aa).

The protein belongs to the PlsX family. As to quaternary structure, homodimer. Probably interacts with PlsY.

It localises to the cytoplasm. It catalyses the reaction a fatty acyl-[ACP] + phosphate = an acyl phosphate + holo-[ACP]. It functions in the pathway lipid metabolism; phospholipid metabolism. Its function is as follows. Catalyzes the reversible formation of acyl-phosphate (acyl-PO(4)) from acyl-[acyl-carrier-protein] (acyl-ACP). This enzyme utilizes acyl-ACP as fatty acyl donor, but not acyl-CoA. The chain is Phosphate acyltransferase from Brucella melitensis biotype 2 (strain ATCC 23457).